A 244-amino-acid chain; its full sequence is Type III pantothenate kinase (244 aa).

8–15 provides a ligand contact to ATP; the sequence is DQGNSACK. 94–97 is a substrate binding site; it reads GADR. D96 serves as the catalytic Proton acceptor. A K(+)-binding site is contributed by D117. Residue T120 coordinates ATP. T175 serves as a coordination point for substrate.

Belongs to the type III pantothenate kinase family. As to quaternary structure, homodimer. NH4(+) serves as cofactor. It depends on K(+) as a cofactor.

Its subcellular location is the cytoplasm. The enzyme catalyses (R)-pantothenate + ATP = (R)-4'-phosphopantothenate + ADP + H(+). It functions in the pathway cofactor biosynthesis; coenzyme A biosynthesis; CoA from (R)-pantothenate: step 1/5. In terms of biological role, catalyzes the phosphorylation of pantothenate (Pan), the first step in CoA biosynthesis. The protein is Type III pantothenate kinase of Porphyromonas gingivalis (strain ATCC 33277 / DSM 20709 / CIP 103683 / JCM 12257 / NCTC 11834 / 2561).